Consider the following 322-residue polypeptide: Ribonuclease Z (322 aa).

His-62, His-64, Asp-66, His-67, His-139, Asp-210, and His-268 together coordinate Zn(2+). The Proton acceptor role is filled by Asp-66.

Belongs to the RNase Z family. Homodimer. It depends on Zn(2+) as a cofactor.

It carries out the reaction Endonucleolytic cleavage of RNA, removing extra 3' nucleotides from tRNA precursor, generating 3' termini of tRNAs. A 3'-hydroxy group is left at the tRNA terminus and a 5'-phosphoryl group is left at the trailer molecule.. Functionally, zinc phosphodiesterase, which displays some tRNA 3'-processing endonuclease activity. Probably involved in tRNA maturation, by removing a 3'-trailer from precursor tRNA. This Nostoc sp. (strain PCC 7120 / SAG 25.82 / UTEX 2576) protein is Ribonuclease Z.